An 89-amino-acid polypeptide reads, in one-letter code: Tuberculin-active protein (89 aa).

C27 and C59 form a disulfide bridge. A disordered region spans residues 61-89 (DGGSESEGKNGSQMRLIADVGPESATVAK).

In terms of biological role, tuberculin is the soluble, proteinaceous cell substance of the bacterium, to which infected animals become hypersensitive and react characteristically to dermal injections. This chain is Tuberculin-active protein, found in Mycobacterium tuberculosis.